The sequence spans 350 residues: Biotin synthase (350 aa).

In terms of domain architecture, Radical SAM core spans 41–265; sequence NEVQISRLLS…VMPLSRVRLS (225 aa). 3 residues coordinate [4Fe-4S] cluster: Cys-56, Cys-60, and Cys-63. Residues Cys-100, Cys-131, Cys-191, and Arg-263 each contribute to the [2Fe-2S] cluster site.

The protein belongs to the radical SAM superfamily. Biotin synthase family. As to quaternary structure, homodimer. [4Fe-4S] cluster is required as a cofactor. It depends on [2Fe-2S] cluster as a cofactor.

It catalyses the reaction (4R,5S)-dethiobiotin + (sulfur carrier)-SH + 2 reduced [2Fe-2S]-[ferredoxin] + 2 S-adenosyl-L-methionine = (sulfur carrier)-H + biotin + 2 5'-deoxyadenosine + 2 L-methionine + 2 oxidized [2Fe-2S]-[ferredoxin]. It participates in cofactor biosynthesis; biotin biosynthesis; biotin from 7,8-diaminononanoate: step 2/2. Functionally, catalyzes the conversion of dethiobiotin (DTB) to biotin by the insertion of a sulfur atom into dethiobiotin via a radical-based mechanism. In Shewanella loihica (strain ATCC BAA-1088 / PV-4), this protein is Biotin synthase.